Here is a 70-residue protein sequence, read N- to C-terminus: Spore germination protein-like protein YpzD (70 aa).

It belongs to the GerPA/GerPF family.

The polypeptide is Spore germination protein-like protein YpzD (ypzD) (Bacillus subtilis (strain 168)).